Consider the following 1230-residue polypeptide: MSLLSRFFYKRPPDGLLEFADRVYVFDSCFCTEVLADSLYQIFLHEVINDLHEEFPESSFLAFNFREGEKKSVFAETLCEYDVTVLEYPRQYEGCPMLPLSLIQHFLRVCESWLARGNRQDVILLHCERGGWPLLAFILASFLIFRKVHSGERRTLEIVHREAPKGLLQLLSPLNPFPSQLRYLQYVARRNINSEWPPPERALSLDCVIIRGIPNFDSQHGCRPIIRIFGRNYSSKSGLSTEMVYSMSDKKKPLRHYRQAECDVIKIDIQCWVQGDVVLECVHMDLDPEREVMMFRVMFNTAFIRSNILMLNSDNLDILWEAKDHYPKGFRAEVLFGEVENASPQKVPTPIVNGDETGGLPIEAFSRVQELFSGVDLAENGDDAALWLLKQLAAINDAKEFTRFRHKGSFYFNSPDSEEETNTSSAADSSDEGFEAIQRPRIHIPFDNDDTDDITLSVAHESSEEPHEFSHHHHHEIPAKDSVDNPLNLPSDPPSSGDHVTLLPPPPPPPPPPLFTSTTSFSPSQPPPPPPPPPLFMSTTSFSPSQPPPPPPPPPLFTSTTSFSPSQPPPPPPLPSFSNRDPLTTLHQPINKTPPPPPPPPPPLPSRSIPPPLAQPPPPRPPPPPPPPPSSRSIPSPSAPPPPPPPPPSFGSTGNKRQAQPPPPPPPPPPTRIPAAKCAPPPPPPPPTSHSGSIRVGPPSTPPPPPPPPPKANISNAPKPPAPPPLPPSSTRLGAPPPPPPPPLSKTPAPPPPPLSKTPVPPPPPGLGRGTSSGPPPLGAKGSNAPPPPPPAGRGRASLGLGRGRGVSVPTAAPKKTALKPLHWSKVTRAAKGSLWADTQKQENQPRAPEIDISELESLFSAVSDTTAKKSTGRRGSSISKPEKVQLVDLRRANNCEIMLTKIKIPLPDMLSAVLALDSLALDIDQVENLIKFCPTKEEMELLRNYTGDKEMLGKCEQFFMELMKVPRIEAKLRVFGFKITFASQVEELKSCLNTINAATKEVKESAKLRQIMQTILTLGNALNQGTARGSAVGFKLDSLLKLSDTRARNNKMTLMHYLCKLVGEKMPELLDFANDLVHLEAASKIELKTLAEEMQAATKGLEKVEQELMASENDGAISLGFRKVLKEFLDMADEEVKTLASLYSEVGRNADSLSHYFGEDPARCPFEQVTKILTLFMKTFIKSREENEKQAEAEKKKLEKEAIKEKSATKKDGVDNDNDLIQQIHRHRT.

The Phosphatase tensin-type domain occupies 1–194; it reads MSLLSRFFYK…QYVARRNINS (194 aa). Cys127 serves as the catalytic Phosphocysteine intermediate. The region spanning 200–339 is the C2 tensin-type domain; that stretch reads ERALSLDCVI…FRAEVLFGEV (140 aa). Disordered regions lie at residues 412–432, 460–822, and 1187–1230; these read FNSP…SSDE, HESS…LKPL, and ENEK…RHRT. Low complexity predominate over residues 484-496; the sequence is DNPLNLPSDPPSS. Pro residues-rich tracts occupy residues 503 to 514, 524 to 535, 545 to 556, and 566 to 575; these read LPPPPPPPPPPL, SQPPPPPPPPPL, and SQPPPPPPLP. Over residues 579–591 the composition is skewed to polar residues; the sequence is NRDPLTTLHQPIN. Pro residues-rich tracts occupy residues 592 to 630, 637 to 649, 660 to 672, 679 to 688, 699 to 711, 718 to 728, and 735 to 766; these read KTPP…PPPS, PSAP…PPPS, QPPP…PPTR, APPPPPPPPT, PSTP…PPPK, PKPPAPPPLPP, and APPP…PPPG. Positions 809–1207 constitute an FH2 domain; it reads VPTAAPKKTA…KLEKEAIKEK (399 aa). Residues 1187 to 1215 are compositionally biased toward basic and acidic residues; the sequence is ENEKQAEAEKKKLEKEAIKEKSATKKDGV.

It belongs to the formin-like family. Class-II subfamily.

The chain is Formin-like protein 14 (FH14) from Arabidopsis thaliana (Mouse-ear cress).